We begin with the raw amino-acid sequence, 359 residues long: MSFDSGLEELSEKFYKLKHLLEDPSQLSVESFVNASKEYSELLPIISVIDEYNAVQKDIKDLQELINNQETDTELKNLAKEEFYELQKQLPKVKHKLKLSLLPKDKDDARNAILEIRAGTGGEEAALFVTDLYRMYIKYAEKKNWKIEQINSSSTGIGGHKEVSLCVSGSNVFAKLKFESGVHRVQRVPETEASGRLHTSAATVAVLPEIEEVDLKIDEKDLRIDVYRSSGPGGQSVNTTDSAVRITHIPSGIVVIQQDEKSQHKNKNKALKVLRARLYDLEKQKRDAEISQLRKSQIGSGDRSERIRTYNFPQSRITDHRINLTLYRLEDIMKEGDLDELIEALIAEDEANKLKNLNI.

Residue glutamine 235 is modified to N5-methylglutamine.

Belongs to the prokaryotic/mitochondrial release factor family. Methylated by PrmC. Methylation increases the termination efficiency of RF1.

Its subcellular location is the cytoplasm. In terms of biological role, peptide chain release factor 1 directs the termination of translation in response to the peptide chain termination codons UAG and UAA. The sequence is that of Peptide chain release factor 1 from Ehrlichia ruminantium (strain Gardel).